The primary structure comprises 463 residues: Sodium-coupled neutral amino acid transporter 7 (463 aa).

A Phosphoserine modification is found at S28. The next 11 helical transmembrane spans lie at 56–76 (AVFI…PAAF), 82–102 (VAAG…GLVI), 130–150 (LCEI…LIII), 179–199 (FTIS…KEIG), 206–226 (SLSV…YIWP), 240–260 (ASWM…QCHV), 283–303 (AAMV…FLTF), 320–340 (VAVA…YPIL), 372–392 (VLQT…IPDI), 396–416 (ISVI…LCLI), and 429–449 (ASWW…AFIF).

The protein belongs to the amino acid/polyamine transporter 2 family. As to quaternary structure, interacts with the mTORC1 complex; this interaction mediates the recruitment of mTORC1 to the lysosome and its subsequent activation.

It localises to the lysosome membrane. The protein resides in the cell projection. It is found in the axon. It carries out the reaction L-asparagine(in) + Na(+)(in) = L-asparagine(out) + Na(+)(out). It catalyses the reaction L-glutamine(in) + Na(+)(in) = L-glutamine(out) + Na(+)(out). Symporter that selectively cotransports sodium ions and amino acids, such as L-glutamine and L-asparagine from the lysosome into the cytoplasm and may participates in mTORC1 activation. The transport activity requires an acidic lysosomal lumen. This chain is Sodium-coupled neutral amino acid transporter 7, found in Rattus norvegicus (Rat).